A 335-amino-acid polypeptide reads, in one-letter code: Glucokinase (335 aa).

Residue alanine 11–threonine 16 participates in ATP binding.

This sequence belongs to the bacterial glucokinase family.

It is found in the cytoplasm. It carries out the reaction D-glucose + ATP = D-glucose 6-phosphate + ADP + H(+). The sequence is that of Glucokinase from Stenotrophomonas maltophilia (strain R551-3).